The sequence spans 303 residues: L(+)-tartrate dehydratase subunit alpha (303 aa).

Iron-sulfur cluster-binding residues include Cys71, Cys190, and Cys277.

This sequence belongs to the class-I fumarase family. In terms of assembly, tetramer of two alpha and two beta subunits. It depends on iron-sulfur cluster as a cofactor.

It carries out the reaction (2R,3R)-tartrate = oxaloacetate + H2O. The protein is L(+)-tartrate dehydratase subunit alpha (ttdA) of Escherichia coli O6:K15:H31 (strain 536 / UPEC).